The primary structure comprises 396 residues: Anhydro-N-acetylmuramic acid kinase (396 aa).

Residue Gly21–Asp28 coordinates ATP.

Belongs to the anhydro-N-acetylmuramic acid kinase family.

It carries out the reaction 1,6-anhydro-N-acetyl-beta-muramate + ATP + H2O = N-acetyl-D-muramate 6-phosphate + ADP + H(+). It functions in the pathway amino-sugar metabolism; 1,6-anhydro-N-acetylmuramate degradation. The protein operates within cell wall biogenesis; peptidoglycan recycling. In terms of biological role, catalyzes the specific phosphorylation of 1,6-anhydro-N-acetylmuramic acid (anhMurNAc) with the simultaneous cleavage of the 1,6-anhydro ring, generating MurNAc-6-P. Is required for the utilization of anhMurNAc either imported from the medium or derived from its own cell wall murein, and thus plays a role in cell wall recycling. In Caldanaerobacter subterraneus subsp. tengcongensis (strain DSM 15242 / JCM 11007 / NBRC 100824 / MB4) (Thermoanaerobacter tengcongensis), this protein is Anhydro-N-acetylmuramic acid kinase.